The following is a 185-amino-acid chain: Dioxygenase easH (185 aa).

Residues His17, Asp19, and His93 each contribute to the Fe cation site.

Belongs to the PhyH family. Homodimer. It depends on Fe cation as a cofactor.

It functions in the pathway alkaloid biosynthesis; ergot alkaloid biosynthesis. Dioxygenase; part of the gene cluster that mediates the biosynthesis of fungal ergot alkaloid ergovaline, the predominant ergopeptine product in E.festucae var. lolii. DmaW catalyzes the first step of ergot alkaloid biosynthesis by condensing dimethylallyl diphosphate (DMAP) and tryptophan to form 4-dimethylallyl-L-tryptophan. The second step is catalyzed by the methyltransferase easF that methylates 4-dimethylallyl-L-tryptophan in the presence of S-adenosyl-L-methionine, resulting in the formation of 4-dimethylallyl-L-abrine. The catalase easC and the FAD-dependent oxidoreductase easE then transform 4-dimethylallyl-L-abrine to chanoclavine-I which is further oxidized by easD in the presence of NAD(+), resulting in the formation of chanoclavine-I aldehyde. Agroclavine dehydrogenase easG then mediates the conversion of chanoclavine-I aldehyde to agroclavine via a non-enzymatic adduct reaction: the substrate is an iminium intermediate that is formed spontaneously from chanoclavine-I aldehyde in the presence of glutathione. The presence of easA is not required to complete this reaction. Further conversion of agroclavine to paspalic acid is a two-step process involving oxidation of agroclavine to elymoclavine and of elymoclavine to paspalic acid, the second step being performed by the elymoclavine oxidase cloA. Paspalic acid is then further converted to D-lysergic acid. Ergovaline is assembled from D-lysergic acid and three different amino acids by the D-lysergyl-peptide-synthetase composed of a monomudular (lpsB) and a trimodular (lpsA) nonribosomal peptide synthetase subunit. The sequence is that of Dioxygenase easH from Epichloe festucae var. lolii (Neotyphodium lolii).